The chain runs to 410 residues: Elongation factor Tu, apicoplast (410 aa).

In terms of domain architecture, tr-type G spans 10-214; sequence KQHINLGTIG…QIIDNIIIPT (205 aa). Residues 19-26 form a G1 region; the sequence is GHVDHGKT. GTP is bound at residue 19 to 26; that stretch reads GHVDHGKT. Mg(2+) is bound at residue T26. The G2 stretch occupies residues 60–64; sequence GITIN. Positions 81–84 are G3; it reads DCPG. GTP-binding positions include 81–85 and 136–139; these read DCPGH and NKED. The interval 136–139 is G4; sequence NKED. The segment at 174–176 is G5; the sequence is SAL.

It belongs to the TRAFAC class translation factor GTPase superfamily. Classic translation factor GTPase family. EF-Tu/EF-1A subfamily.

It localises to the plastid. It is found in the apicoplast. The enzyme catalyses GTP + H2O = GDP + phosphate + H(+). Functionally, GTP hydrolase that promotes the GTP-dependent binding of aminoacyl-tRNA to the A-site of ribosomes during protein biosynthesis. This is Elongation factor Tu, apicoplast (tufA) from Plasmodium falciparum (isolate 3D7).